Consider the following 126-residue polypeptide: Aspartate 1-decarboxylase (126 aa).

Ser25 serves as the catalytic Schiff-base intermediate with substrate; via pyruvic acid. A Pyruvic acid (Ser) modification is found at Ser25. Residue Thr57 coordinates substrate. Tyr58 functions as the Proton donor in the catalytic mechanism. Substrate is bound at residue 73–75 (GAA).

Belongs to the PanD family. As to quaternary structure, heterooctamer of four alpha and four beta subunits. Pyruvate is required as a cofactor. Post-translationally, is synthesized initially as an inactive proenzyme, which is activated by self-cleavage at a specific serine bond to produce a beta-subunit with a hydroxyl group at its C-terminus and an alpha-subunit with a pyruvoyl group at its N-terminus.

It is found in the cytoplasm. It carries out the reaction L-aspartate + H(+) = beta-alanine + CO2. The protein operates within cofactor biosynthesis; (R)-pantothenate biosynthesis; beta-alanine from L-aspartate: step 1/1. Functionally, catalyzes the pyruvoyl-dependent decarboxylation of aspartate to produce beta-alanine. This chain is Aspartate 1-decarboxylase, found in Halorhodospira halophila (strain DSM 244 / SL1) (Ectothiorhodospira halophila (strain DSM 244 / SL1)).